The sequence spans 545 residues: CTP synthase (545 aa).

The tract at residues 1-266 (MTTNYIFVTG…DDYICKRFSL (266 aa)) is amidoligase domain. A CTP-binding site is contributed by S14. S14 lines the UTP pocket. ATP is bound by residues 15–20 (SLGKGI) and D72. Residues D72 and E140 each contribute to the Mg(2+) site. Residues 147-149 (DIE), 187-192 (KTKPTQ), and K223 each bind CTP. UTP-binding positions include 187 to 192 (KTKPTQ) and K223. 239 to 241 (KDI) serves as a coordination point for ATP. The Glutamine amidotransferase type-1 domain maps to 291 to 542 (TIGMVGKYVA…VKAAGAYQKR (252 aa)). Residue G352 participates in L-glutamine binding. The Nucleophile; for glutamine hydrolysis role is filled by C379. L-glutamine contacts are provided by residues 380-383 (LGMQ), E403, and R470. Residues H515 and E517 contribute to the active site.

The protein belongs to the CTP synthase family. Homotetramer.

It carries out the reaction UTP + L-glutamine + ATP + H2O = CTP + L-glutamate + ADP + phosphate + 2 H(+). The enzyme catalyses L-glutamine + H2O = L-glutamate + NH4(+). It catalyses the reaction UTP + NH4(+) + ATP = CTP + ADP + phosphate + 2 H(+). The protein operates within pyrimidine metabolism; CTP biosynthesis via de novo pathway; CTP from UDP: step 2/2. Allosterically activated by GTP, when glutamine is the substrate; GTP has no effect on the reaction when ammonia is the substrate. The allosteric effector GTP functions by stabilizing the protein conformation that binds the tetrahedral intermediate(s) formed during glutamine hydrolysis. Inhibited by the product CTP, via allosteric rather than competitive inhibition. Functionally, catalyzes the ATP-dependent amination of UTP to CTP with either L-glutamine or ammonia as the source of nitrogen. Regulates intracellular CTP levels through interactions with the four ribonucleotide triphosphates. The polypeptide is CTP synthase (Pectobacterium atrosepticum (strain SCRI 1043 / ATCC BAA-672) (Erwinia carotovora subsp. atroseptica)).